The following is a 500-amino-acid chain: Cytochrome P450 71B35 (500 aa).

The helical transmembrane segment at 1–21 (MAHIWLLPLIFLVCILLAVFN) threads the bilayer. C439 contacts heme.

This sequence belongs to the cytochrome P450 family. The cofactor is heme.

The protein resides in the membrane. This Arabidopsis thaliana (Mouse-ear cress) protein is Cytochrome P450 71B35 (CYP71B35).